A 304-amino-acid chain; its full sequence is Recombination-associated protein RdgC (304 aa).

It belongs to the RdgC family.

It is found in the cytoplasm. The protein resides in the nucleoid. Functionally, may be involved in recombination. In Shewanella oneidensis (strain ATCC 700550 / JCM 31522 / CIP 106686 / LMG 19005 / NCIMB 14063 / MR-1), this protein is Recombination-associated protein RdgC.